We begin with the raw amino-acid sequence, 237 residues long: Phosphatidylserine decarboxylase proenzyme (237 aa).

Ser206 functions as the Schiff-base intermediate with substrate; via pyruvic acid in the catalytic mechanism. A Pyruvic acid (Ser); by autocatalysis modification is found at Ser206.

It belongs to the phosphatidylserine decarboxylase family. PSD-A subfamily. Heterodimer of a large membrane-associated beta subunit and a small pyruvoyl-containing alpha subunit. Pyruvate serves as cofactor. In terms of processing, is synthesized initially as an inactive proenzyme. Formation of the active enzyme involves a self-maturation process in which the active site pyruvoyl group is generated from an internal serine residue via an autocatalytic post-translational modification. Two non-identical subunits are generated from the proenzyme in this reaction, and the pyruvate is formed at the N-terminus of the alpha chain, which is derived from the carboxyl end of the proenzyme. The post-translation cleavage follows an unusual pathway, termed non-hydrolytic serinolysis, in which the side chain hydroxyl group of the serine supplies its oxygen atom to form the C-terminus of the beta chain, while the remainder of the serine residue undergoes an oxidative deamination to produce ammonia and the pyruvoyl prosthetic group on the alpha chain.

Its subcellular location is the cell membrane. The enzyme catalyses a 1,2-diacyl-sn-glycero-3-phospho-L-serine + H(+) = a 1,2-diacyl-sn-glycero-3-phosphoethanolamine + CO2. Its pathway is phospholipid metabolism; phosphatidylethanolamine biosynthesis; phosphatidylethanolamine from CDP-diacylglycerol: step 2/2. Functionally, catalyzes the formation of phosphatidylethanolamine (PtdEtn) from phosphatidylserine (PtdSer). This is Phosphatidylserine decarboxylase proenzyme from Rhodococcus opacus (strain B4).